The primary structure comprises 217 residues: Probable transaldolase (217 aa).

The active-site Schiff-base intermediate with substrate is Lys-83.

It belongs to the transaldolase family. Type 3B subfamily.

The protein localises to the cytoplasm. The enzyme catalyses D-sedoheptulose 7-phosphate + D-glyceraldehyde 3-phosphate = D-erythrose 4-phosphate + beta-D-fructose 6-phosphate. It participates in carbohydrate degradation; pentose phosphate pathway; D-glyceraldehyde 3-phosphate and beta-D-fructose 6-phosphate from D-ribose 5-phosphate and D-xylulose 5-phosphate (non-oxidative stage): step 2/3. Transaldolase is important for the balance of metabolites in the pentose-phosphate pathway. The polypeptide is Probable transaldolase (Pseudothermotoga lettingae (strain ATCC BAA-301 / DSM 14385 / NBRC 107922 / TMO) (Thermotoga lettingae)).